A 61-amino-acid polypeptide reads, in one-letter code: uncharacterized protein (61 aa).

At 1–20 (MSSTTSTINLSSLGSAINDV) the chain is on the extracellular side. A helical transmembrane segment spans residues 21–41 (LNIIVQYLPVFVTVAVLFGII). Topologically, residues 42–61 (TYMTGGLGGLFSGITGIFGS) are cytoplasmic.

The protein localises to the host membrane. This is an uncharacterized protein from Acidianus filamentous virus 2 (isolate Italy/Pozzuoli) (AFV-2).